Reading from the N-terminus, the 425-residue chain is MATEKPHINLAVIGHIDHGKSTTVGRLMYEAGAVPAHIIEQYKKEAESKGKGSFAFAWVMDNLKEERERGITIDIAHKRFDTDKYYFTVVDCPGHRDFVKNMITGASQADAAVIVVAAPDGVMEQTKEHVFLSKTLGIKQLIVAVNKMDAANYDEARFNQVKSDVGALLKMVGTNPDTVKFIPISAFEGDNITKNSDKMPWYKGKTLFGLLDELEVPDKPTEKPLRVPIQDAYSISGIGTVPVGRVETGILKKGMNVTFMPANKSGEVKSIEMHHEEIPQAVPGDNIGFNVRGIGKDDVRRGDVCGASDNPPAVAEEFTAQIVVLQHPSAITVGYTPVFHCHTAQTACTFTELVKKLDPRTGQTLEENPTFLKAGDAAIIKCHPTKPLCLENAKEFPQLGRFAIRDMGQTIAAGMCINVVKKQMR.

Residues 5 to 221 (KPHINLAVIG…DELEVPDKPT (217 aa)) form the tr-type G domain. The G1 stretch occupies residues 14–21 (GHIDHGKS). GTP is bound at residue 14-21 (GHIDHGKS). Residue Ser-21 participates in Mg(2+) binding. The segment at 70–74 (GITID) is G2. Positions 91–94 (DCPG) are G3. Residues 91–95 (DCPGH) and 146–149 (NKMD) each bind GTP. The segment at 146–149 (NKMD) is G4. The tract at residues 185–187 (SAF) is G5.

Belongs to the TRAFAC class translation factor GTPase superfamily. Classic translation factor GTPase family. EF-Tu/EF-1A subfamily.

Its subcellular location is the cytoplasm. The catalysed reaction is GTP + H2O = GDP + phosphate + H(+). GTP hydrolase that promotes the GTP-dependent binding of aminoacyl-tRNA to the A-site of ribosomes during protein biosynthesis. The sequence is that of Elongation factor 1-alpha from Methanospirillum hungatei JF-1 (strain ATCC 27890 / DSM 864 / NBRC 100397 / JF-1).